Here is a 535-residue protein sequence, read N- to C-terminus: Bifunctional purine biosynthesis protein PurH (535 aa).

The region spanning 1–145 is the MGS-like domain; it reads MAQTALISVS…KNWKDVGVLT (145 aa).

This sequence belongs to the PurH family.

The enzyme catalyses (6R)-10-formyltetrahydrofolate + 5-amino-1-(5-phospho-beta-D-ribosyl)imidazole-4-carboxamide = 5-formamido-1-(5-phospho-D-ribosyl)imidazole-4-carboxamide + (6S)-5,6,7,8-tetrahydrofolate. The catalysed reaction is IMP + H2O = 5-formamido-1-(5-phospho-D-ribosyl)imidazole-4-carboxamide. Its pathway is purine metabolism; IMP biosynthesis via de novo pathway; 5-formamido-1-(5-phospho-D-ribosyl)imidazole-4-carboxamide from 5-amino-1-(5-phospho-D-ribosyl)imidazole-4-carboxamide (10-formyl THF route): step 1/1. The protein operates within purine metabolism; IMP biosynthesis via de novo pathway; IMP from 5-formamido-1-(5-phospho-D-ribosyl)imidazole-4-carboxamide: step 1/1. The chain is Bifunctional purine biosynthesis protein PurH from Variovorax paradoxus (strain S110).